Reading from the N-terminus, the 731-residue chain is Fatty acid oxidation complex subunit alpha (731 aa).

The tract at residues 15 to 204 is enoyl-CoA hydratase; it reads TEKTSAFSLT…RQGLVDEAVP (190 aa). The tract at residues 320-729 is 3-hydroxyacyl-CoA dehydrogenase; the sequence is KPIHRVGILG…FYPPADKDNS (410 aa).

This sequence in the N-terminal section; belongs to the enoyl-CoA hydratase/isomerase family. In the central section; belongs to the 3-hydroxyacyl-CoA dehydrogenase family. As to quaternary structure, heterotetramer of two alpha chains (FadJ) and two beta chains (FadI).

The protein localises to the cytoplasm. It carries out the reaction a (3S)-3-hydroxyacyl-CoA = a (2E)-enoyl-CoA + H2O. It catalyses the reaction a 4-saturated-(3S)-3-hydroxyacyl-CoA = a (3E)-enoyl-CoA + H2O. The enzyme catalyses a (3S)-3-hydroxyacyl-CoA + NAD(+) = a 3-oxoacyl-CoA + NADH + H(+). The catalysed reaction is (3S)-3-hydroxybutanoyl-CoA = (3R)-3-hydroxybutanoyl-CoA. Its pathway is lipid metabolism; fatty acid beta-oxidation. In terms of biological role, catalyzes the formation of a hydroxyacyl-CoA by addition of water on enoyl-CoA. Also exhibits 3-hydroxyacyl-CoA epimerase and 3-hydroxyacyl-CoA dehydrogenase activities. This Pectobacterium atrosepticum (strain SCRI 1043 / ATCC BAA-672) (Erwinia carotovora subsp. atroseptica) protein is Fatty acid oxidation complex subunit alpha.